A 396-amino-acid polypeptide reads, in one-letter code: Na(+)/H(+) antiporter NhaA 1 (396 aa).

12 helical membrane passes run 9-29, 59-79, 95-115, 125-145, 154-174, 177-197, 200-220, 223-243, 260-280, 281-301, 332-352, and 373-393; these read LHNE…AMLI, LLLW…GLEL, VLPV…YVMF, GWAV…ALLG, LFLL…IAIF, SDLS…LFLL, IGVK…VAVL, GVHA…KGET, VVGL…SLAG, LGLN…LLLG, GVAL…SLAF, and ILSG…FSLA.

This sequence belongs to the NhaA Na(+)/H(+) (TC 2.A.33) antiporter family.

The protein resides in the cell inner membrane. The catalysed reaction is Na(+)(in) + 2 H(+)(out) = Na(+)(out) + 2 H(+)(in). Functionally, na(+)/H(+) antiporter that extrudes sodium in exchange for external protons. In Magnetococcus marinus (strain ATCC BAA-1437 / JCM 17883 / MC-1), this protein is Na(+)/H(+) antiporter NhaA 1.